Here is a 772-residue protein sequence, read N- to C-terminus: Metabotropic glutamate receptor-like protein G (772 aa).

The signal sequence occupies residues 1 to 23 (MKKIIFLVLFLIFIFKDIKSSYG). At 24 to 391 (VDLVNFKMIT…TQVKFSPSIQ (368 aa)) the chain is on the extracellular side. 6 N-linked (GlcNAc...) asparagine glycosylation sites follow: asparagine 73, asparagine 126, asparagine 262, asparagine 313, asparagine 343, and asparagine 378. A helical transmembrane segment spans residues 392–412 (IGVSIVSGVLIAIVLLSMVGV). The Cytoplasmic portion of the chain corresponds to 413 to 426 (YKYRASSSIRSASP). A helical membrane pass occupies residues 427 to 447 (IFLIFILFGALIVFGGIILWV). Residues 448 to 463 (SELNDHVCNGRLWMVT) lie on the Extracellular side of the membrane. The helical transmembrane segment at 464–484 (LGFSTLIGSLVVKNFRIWLIF) threads the bilayer. Topologically, residues 485–500 (DNPELKTVKITNYQLY) are cytoplasmic. Residues 501 to 521 (PWVACCLVINIILMSILTSLG) form a helical membrane-spanning segment. Over 522–551 (DLREVDATGIDSLGKYEFLKICKMNNSGAS) the chain is Extracellular. An N-linked (GlcNAc...) asparagine glycan is attached at asparagine 546. A helical membrane pass occupies residues 552-572 (VLYTILAYFGALLLTGVFVSW). Over 573-586 (KIRIVDIEEFNESR) the chain is Cytoplasmic. The helical transmembrane segment at 587–607 (AIAHTLYAISFCLFVIVPLMI) threads the bilayer. The Extracellular segment spans residues 608-616 (SPLEKQSET). Residues 617-637 (IILSVAGLFITTAAVLIIFLP) traverse the membrane as a helical segment. At 638–772 (KFYRVYEYGE…QIEPDEKNQD (135 aa)) the chain is on the cytoplasmic side. The interval 664 to 772 (TARAESHKSS…QIEPDEKNQD (109 aa)) is disordered. Over residues 718–728 (FTEESVSEIDE) the composition is skewed to acidic residues. Low complexity predominate over residues 740–753 (PEINQSEQQNSEIE). Pro residues predominate over residues 754 to 763 (QPPPPPPPQQ).

It in the N-terminal section; belongs to the BMP lipoprotein family. The protein in the C-terminal section; belongs to the G-protein coupled receptor 3 family. GABA-B receptor subfamily.

The protein resides in the membrane. This Dictyostelium discoideum (Social amoeba) protein is Metabotropic glutamate receptor-like protein G (grlG).